The chain runs to 1364 residues: Formin-like protein 6 (1364 aa).

The Phosphatase tensin-type domain occupies 9–193; it reads YRKPPDGLLE…HYISRRNVSA (185 aa). The active-site Phosphocysteine intermediate is the Cys-126. Positions 199–338 constitute a C2 tensin-type domain; sequence DRALTLDCVI…FRAEVLFSEM (140 aa). Disordered regions lie at residues 614–934, 976–999, and 1317–1364; these read KCTP…NLKP, VLPS…KPEK, and EAEA…ASAK. Pro residues predominate over residues 617–631; that stretch reads PSPPPLLPPLAPVVP. The segment covering 657–690 has biased composition (polar residues); it reads SFPSLSPTQQKQSTSKLCQTILPTNHQLSSSNIT. The span at 734 to 743 shows a compositional bias: pro residues; that stretch reads PPAPPPPPLQ. Over residues 744 to 757 the composition is skewed to low complexity; sequence SPSTPRCSPVRTLA. Composition is skewed to pro residues over residues 774-813 and 856-865; these read GPPP…PAAP and PSPPPPPPPC. Positions 916–929 are enriched in polar residues; sequence MSRSLQSGQAASRR. In terms of domain architecture, FH2 spans 922–1322; the sequence is SGQAASRRSN…KALKEAEAEK (401 aa). Residues 1317–1351 show a composition bias toward basic and acidic residues; sequence EAEAEKTKKEPENAQKTKEPGNDKAKHNNSIKELD. Residues 1353 to 1364 are compositionally biased toward polar residues; it reads SLQSPAQTASAK.

It belongs to the formin-like family. Class-II subfamily.

The protein is Formin-like protein 6 (FH6) of Oryza sativa subsp. japonica (Rice).